The primary structure comprises 185 residues: HTH-type transcriptional regulator SACOL2593 (185 aa).

The 61-residue stretch at Lys-6–Phe-66 folds into the HTH tetR-type domain. The H-T-H motif DNA-binding region spans Ser-29 to Phe-48.

This is HTH-type transcriptional regulator SACOL2593 from Staphylococcus aureus (strain COL).